The following is a 277-amino-acid chain: MSSPIPVVVAGALGRMGAEVINAVVNAEDCQLVGAIDNTPGKEGTDVGLELGIKELEVAVTADFEGCLCAVSQSVRNSDQNAVLVDFTHPSVVFDHTRAAIAYGVHPVIGTTGLSPIQLNDLTEFSAKASIGGAVIPNFSVGMVLLQQAAAAAARFYDHAELTELHHNRKADAPSGTCIKTAELMEEVKQSFNPAEVDEHESLQGSRGGVRDSGLNLHSLRLPGLVAHQEVMFGAPGETYTLRHDTIDRSAYMPGVLLTIRKVGSLQQLVYGLERLI.

Residues 11 to 16 and 110 to 112 each bind NAD(+); these read GALGRM and GTT. Histidine 166 (proton donor/acceptor) is an active-site residue. Residue histidine 167 participates in (S)-2,3,4,5-tetrahydrodipicolinate binding. Residue lysine 170 is the Proton donor of the active site. 176–177 lines the (S)-2,3,4,5-tetrahydrodipicolinate pocket; it reads GT.

It belongs to the DapB family.

The protein resides in the cytoplasm. The catalysed reaction is (S)-2,3,4,5-tetrahydrodipicolinate + NAD(+) + H2O = (2S,4S)-4-hydroxy-2,3,4,5-tetrahydrodipicolinate + NADH + H(+). It catalyses the reaction (S)-2,3,4,5-tetrahydrodipicolinate + NADP(+) + H2O = (2S,4S)-4-hydroxy-2,3,4,5-tetrahydrodipicolinate + NADPH + H(+). It functions in the pathway amino-acid biosynthesis; L-lysine biosynthesis via DAP pathway; (S)-tetrahydrodipicolinate from L-aspartate: step 4/4. Catalyzes the conversion of 4-hydroxy-tetrahydrodipicolinate (HTPA) to tetrahydrodipicolinate. In Synechococcus sp. (strain CC9902), this protein is 4-hydroxy-tetrahydrodipicolinate reductase.